The sequence spans 156 residues: MNLNATLFAQMIVFFVLWWVVARFVWPPLVKALDERSSKIADGLAAAERGKEALALASNEAEQELTKARQEGVQRVAEAEKRAQMSADEIRANAQAEAARIITQAKQDADQQVTSAREVLRAEVAVLAVKGAEQILRREVDAKAHGQLLDQLKAEL.

The helical transmembrane segment at 7-27 (LFAQMIVFFVLWWVVARFVWP) threads the bilayer.

Belongs to the ATPase B chain family. As to quaternary structure, F-type ATPases have 2 components, F(1) - the catalytic core - and F(0) - the membrane proton channel. F(1) has five subunits: alpha(3), beta(3), gamma(1), delta(1), epsilon(1). F(0) has three main subunits: a(1), b(2) and c(10-14). The alpha and beta chains form an alternating ring which encloses part of the gamma chain. F(1) is attached to F(0) by a central stalk formed by the gamma and epsilon chains, while a peripheral stalk is formed by the delta and b chains.

The protein localises to the cell membrane. Functionally, f(1)F(0) ATP synthase produces ATP from ADP in the presence of a proton or sodium gradient. F-type ATPases consist of two structural domains, F(1) containing the extramembraneous catalytic core and F(0) containing the membrane proton channel, linked together by a central stalk and a peripheral stalk. During catalysis, ATP synthesis in the catalytic domain of F(1) is coupled via a rotary mechanism of the central stalk subunits to proton translocation. Its function is as follows. Component of the F(0) channel, it forms part of the peripheral stalk, linking F(1) to F(0). This Polynucleobacter asymbioticus (strain DSM 18221 / CIP 109841 / QLW-P1DMWA-1) (Polynucleobacter necessarius subsp. asymbioticus) protein is ATP synthase subunit b.